The chain runs to 775 residues: DNA polymerase (775 aa).

It belongs to the DNA polymerase type-B family. As to quaternary structure, monomer.

It carries out the reaction DNA(n) + a 2'-deoxyribonucleoside 5'-triphosphate = DNA(n+1) + diphosphate. Its function is as follows. In addition to polymerase activity, this DNA polymerase exhibits 3' to 5' exonuclease activity. This chain is DNA polymerase (pol), found in Pyrococcus glycovorans.